Reading from the N-terminus, the 617-residue chain is Probable translation initiation factor IF-2 (617 aa).

A tr-type G domain is found at 14–231 (LRQPIVVVLG…VLAGLTQTYL (218 aa)). Residues 23 to 30 (GHVDHGKT) form a G1 region. 23 to 30 (GHVDHGKT) serves as a coordination point for GTP. The segment at 48 to 52 (GITQH) is G2. Residues 87–90 (DTPG) are G3. Residues 87–91 (DTPGH) and 141–144 (NKID) each bind GTP. Positions 141 to 144 (NKID) are G4. A G5 region spans residues 209 to 211 (SAR).

Belongs to the TRAFAC class translation factor GTPase superfamily. Classic translation factor GTPase family. IF-2 subfamily.

In terms of biological role, function in general translation initiation by promoting the binding of the formylmethionine-tRNA to ribosomes. Seems to function along with eIF-2. This chain is Probable translation initiation factor IF-2 (infB), found in Aeropyrum pernix (strain ATCC 700893 / DSM 11879 / JCM 9820 / NBRC 100138 / K1).